Consider the following 252-residue polypeptide: VGPFYVGFFGVTAAFFIMLGTALIIWGAALGPTWNIWQISIAPPDLSYGLGLAPLAKGGLWQIITVCAIGAFGSWALREVEISRKLGIGLHVPAAFSVAIFAYVTLEVIRPLLMGAWGNGFPYGIMSHLDWVSNTGYAYLNFEYNPMHMVAVTLFFTTTLALALHGSLVLAAINPPAGETVKFAEHEDTFFRDFIGYSIGTLGIHRLGLFLALGAGFASATCILLSGPFWTQGWPSWWGWWLHLPIWQFGGH.

3 helical membrane passes run 8–30, 58–86, and 91–113; these read FFGVTAAFFIMLGTALIIWGAAL, GGLWQIITVCAIGAFGSWALREVEISRKL, and HVPAAFSVAIFAYVTLEVIRPLL. 2 residues coordinate (7R,8Z)-bacteriochlorophyll b: histidine 128 and histidine 148. A helical membrane pass occupies residues 146–173; it reads PMHMVAVTLFFTTTLALALHGSLVLAAI. Histidine 165 serves as a coordination point for Fe cation. Phenylalanine 191 is an a ubiquinone binding site. A helical membrane pass occupies residues 200–225; sequence GTLGIHRLGLFLALGAGFASATCILL. Residue histidine 205 coordinates Fe cation.

The protein belongs to the reaction center PufL/M/PsbA/D family. In terms of assembly, reaction center is composed of four bacteriochlorophylls, two bacteriopheophytins, two ubiquinones, one iron, and two highly hydrophobic polypeptide chains (designated L and M).

The protein localises to the cell inner membrane. Functionally, the reaction center is a membrane-bound complex that mediates the initial photochemical event in the electron transfer process of photosynthesis. This chain is Reaction center protein L chain (pufL), found in Acidiphilium cryptum.